A 116-amino-acid chain; its full sequence is Iron-sulfur cluster insertion protein ErpA (116 aa).

3 residues coordinate iron-sulfur cluster: Cys-44, Cys-108, and Cys-110.

The protein belongs to the HesB/IscA family. As to quaternary structure, homodimer. It depends on iron-sulfur cluster as a cofactor.

Functionally, required for insertion of 4Fe-4S clusters for at least IspG. This Shewanella pealeana (strain ATCC 700345 / ANG-SQ1) protein is Iron-sulfur cluster insertion protein ErpA.